We begin with the raw amino-acid sequence, 380 residues long: Ubiquitin-like protein 7 (380 aa).

The 81-residue stretch at 18-98 (TPKSILRLPE…VLRKSWPEPD (81 aa)) folds into the Ubiquitin-like domain. Residues 200–313 (APMPGTDSSS…SSGVQSGTPI (114 aa)) form a disordered region. Low complexity predominate over residues 206–221 (DSSSRSMPSSSYRDMP). S230 bears the Phosphoserine mark. Composition is skewed to low complexity over residues 240–253 (TRST…SSRP) and 270–293 (SELA…TPGT). Positions 294-313 (QGHSSGTSPMSSGVQSGTPI) are enriched in polar residues. The UBA domain maps to 333–377 (SLQSQWQPQLQQLRDMGIQDDELSLRALQATGGDIQAALELIFAG).

In terms of assembly, binds ubiquitin. Interacts with MAVS; this interaction enhances TRIM21-dependent 'Lys-27'-linked polyubiquitination of MAVS. In terms of processing, deubiquitinated by OTUD4 which stabilizes UBL7 expression. In terms of tissue distribution, ubiquitous. Highly expressed in heart, skeletal muscle, testis, thyroid and adrenal gland.

Its function is as follows. Interferon-stimulated protein that positively regulates RNA virus-triggered innate immune signaling. Mechanistically, promotes 'Lys-27'-linked polyubiquitination of MAVS through TRIM21 leading to enhanced the IFN signaling pathway. This is Ubiquitin-like protein 7 (UBL7) from Homo sapiens (Human).